Here is a 164-residue protein sequence, read N- to C-terminus: IQ domain-containing protein F2 (164 aa).

2 IQ domains span residues Arg43–Ile72 and Arg99–Ile128.

This chain is IQ domain-containing protein F2 (IQCF2), found in Homo sapiens (Human).